The sequence spans 345 residues: Phosphoribosylformylglycinamidine cyclo-ligase (345 aa).

The protein belongs to the AIR synthase family.

The protein resides in the cytoplasm. It catalyses the reaction 2-formamido-N(1)-(5-O-phospho-beta-D-ribosyl)acetamidine + ATP = 5-amino-1-(5-phospho-beta-D-ribosyl)imidazole + ADP + phosphate + H(+). It participates in purine metabolism; IMP biosynthesis via de novo pathway; 5-amino-1-(5-phospho-D-ribosyl)imidazole from N(2)-formyl-N(1)-(5-phospho-D-ribosyl)glycinamide: step 2/2. The protein is Phosphoribosylformylglycinamidine cyclo-ligase of Anaeromyxobacter sp. (strain K).